The sequence spans 170 residues: Acetyl-CoA decarbonylase/synthase complex subunit epsilon 1 (170 aa).

This sequence belongs to the CdhB family. As to quaternary structure, heterotetramer of two alpha and two epsilon subunits. The ACDS complex is made up of alpha, epsilon, beta, gamma and delta subunits with a probable stoichiometry of (alpha(2)epsilon(2))(4)-beta(8)-(gamma(1)delta(1))(8).

Its pathway is one-carbon metabolism; methanogenesis from acetate. Part of a complex that catalyzes the reversible cleavage of acetyl-CoA, allowing growth on acetate as sole source of carbon and energy. The alpha-epsilon subcomponent functions as a carbon monoxide dehydrogenase. The precise role of the epsilon subunit is unclear; it may have a stabilizing role within the alpha(2)epsilon(2) component and/or be involved in electron transfer to FAD during a potential FAD-mediated CO oxidation. This chain is Acetyl-CoA decarbonylase/synthase complex subunit epsilon 1 (cdhB1), found in Methanosarcina acetivorans (strain ATCC 35395 / DSM 2834 / JCM 12185 / C2A).